Here is a 147-residue protein sequence, read N- to C-terminus: Cyanate hydratase (147 aa).

Residues Arg-88, Glu-91, and Ser-114 contribute to the active site.

Belongs to the cyanase family.

The catalysed reaction is cyanate + hydrogencarbonate + 3 H(+) = NH4(+) + 2 CO2. Catalyzes the reaction of cyanate with bicarbonate to produce ammonia and carbon dioxide. The chain is Cyanate hydratase from Variovorax paradoxus (strain S110).